Here is a 273-residue protein sequence, read N- to C-terminus: uncharacterized protein (273 aa).

An NAD(+)-binding site is contributed by 10-34 (VITGAATGIGQATAEVFANEGARVI). Residue serine 142 participates in substrate binding. The active-site Proton acceptor is tyrosine 155.

The protein belongs to the short-chain dehydrogenases/reductases (SDR) family.

This is an uncharacterized protein from Bacillus subtilis (strain 168).